A 258-amino-acid polypeptide reads, in one-letter code: Granzyme A (258 aa).

The N-terminal stretch at 1 to 26 (MNIPFPFSFPPAICLLLIPGVFPVSC) is a signal peptide. Residues 27 to 28 (EG) constitute a propeptide, activation peptide. Residues 29-255 (IIGGNEVAPH…HLNWIKKTIA (227 aa)) form the Peptidase S1 domain. The cysteines at positions 52 and 68 are disulfide-linked. Active-site charge relay system residues include His67 and Asp112. 3 disulfides stabilise this stretch: Cys146/Cys217, Cys178/Cys196, and Cys207/Cys230. N-linked (GlcNAc...) asparagine glycosylation is present at Asn169. Ser211 serves as the catalytic Charge relay system.

The protein belongs to the peptidase S1 family. Granzyme subfamily. In terms of assembly, homodimer; disulfide-linked. Interacts with APEX1.

Its subcellular location is the secreted. It localises to the cytoplasmic granule. The enzyme catalyses Hydrolysis of proteins, including fibronectin, type IV collagen and nucleolin. Preferential cleavage: -Arg-|-Xaa-, -Lys-|-Xaa- &gt;&gt; -Phe-|-Xaa- in small molecule substrates.. In terms of biological role, abundant protease in the cytosolic granules of cytotoxic T-cells and NK-cells which activates caspase-independent pyroptosis when delivered into the target cell through the immunological synapse. It cleaves after Lys or Arg. Cleaves APEX1 after 'Lys-31' and destroys its oxidative repair activity. Cleaves the nucleosome assembly protein SET after 'Lys-189', which disrupts its nucleosome assembly activity and allows the SET complex to translocate into the nucleus to nick and degrade the DNA. This chain is Granzyme A (GZMA), found in Bos taurus (Bovine).